Here is a 592-residue protein sequence, read N- to C-terminus: Membrane protein insertase YidC (592 aa).

The chain crosses the membrane as a helical span at residues 7–27 (NYFVAIALSVLILVAWQYFYV). Positions 38–74 (AEKAQQTQQVQPQQGGQQPAPGQALPGGAVPGESRDQ) are disordered. The segment covering 41-69 (AQQTQQVQPQQGGQQPAPGQALPGGAVPG) has biased composition (low complexity). A run of 4 helical transmembrane segments spans residues 367 to 387 (LFGN…LIFF), 441 to 461 (WPIL…YITI), 486 to 506 (LFGL…WPII), and 530 to 550 (FTWM…GLVI).

The protein belongs to the OXA1/ALB3/YidC family. Type 1 subfamily. In terms of assembly, interacts with the Sec translocase complex via SecD. Specifically interacts with transmembrane segments of nascent integral membrane proteins during membrane integration.

The protein localises to the cell inner membrane. Its function is as follows. Required for the insertion and/or proper folding and/or complex formation of integral membrane proteins into the membrane. Involved in integration of membrane proteins that insert both dependently and independently of the Sec translocase complex, as well as at least some lipoproteins. Aids folding of multispanning membrane proteins. The sequence is that of Membrane protein insertase YidC from Sinorhizobium fredii (strain NBRC 101917 / NGR234).